The primary structure comprises 357 residues: MSRTGYTLPVFAAAAARAALLHLIEKVPCASVQLDLLGEQAAIPIEQVARLDAETALGVTRSDPGDNLDLTRHTPVWAWVHLEVGTGEVLRLEAGEGLGRTAAGEAAIYRYARQLMEANVAPLVPTGRTATVRFILPEGRALALRTSNAAFGILEGLALLGTSGLSQPLSAADHLESFRAALRERAERERRLVFCIGAGGLQAAGRLGLDQGATVQTGNWIGALLVEAGMLGIESVLLLGYQGKLVKLAAGIFNTSSHVADGRLETIAAGAVAAGADIETVRTVLEAPTADAACALLAAAGWAEKIYAALAERVSGRSVEYVRKYTERTMAVATMLLDRQGRVIARDRAAAEWLAEP.

It belongs to the CbiD family.

It carries out the reaction Co-precorrin-5B + S-adenosyl-L-methionine = Co-precorrin-6A + S-adenosyl-L-homocysteine. The protein operates within cofactor biosynthesis; adenosylcobalamin biosynthesis; cob(II)yrinate a,c-diamide from sirohydrochlorin (anaerobic route): step 6/10. Its function is as follows. Catalyzes the methylation of C-1 in cobalt-precorrin-5B to form cobalt-precorrin-6A. This Gloeobacter violaceus (strain ATCC 29082 / PCC 7421) protein is Cobalt-precorrin-5B C(1)-methyltransferase.